Here is a 136-residue protein sequence, read N- to C-terminus: Fatty acid-binding protein homolog 5 (136 aa).

Residues arginine 111 and 131-133 (RAY) contribute to the a fatty acid site.

The protein belongs to the calycin superfamily. Fatty-acid binding protein (FABP) family.

The sequence is that of Fatty acid-binding protein homolog 5 (lbp-5) from Caenorhabditis elegans.